Reading from the N-terminus, the 441-residue chain is ATP-dependent protease ATPase subunit HslU (441 aa).

ATP contacts are provided by residues Ile-18, 60 to 65, Asp-254, Glu-319, and Arg-391; that span reads GVGKTE.

The protein belongs to the ClpX chaperone family. HslU subfamily. A double ring-shaped homohexamer of HslV is capped on each side by a ring-shaped HslU homohexamer. The assembly of the HslU/HslV complex is dependent on binding of ATP.

Its subcellular location is the cytoplasm. Its function is as follows. ATPase subunit of a proteasome-like degradation complex; this subunit has chaperone activity. The binding of ATP and its subsequent hydrolysis by HslU are essential for unfolding of protein substrates subsequently hydrolyzed by HslV. HslU recognizes the N-terminal part of its protein substrates and unfolds these before they are guided to HslV for hydrolysis. The polypeptide is ATP-dependent protease ATPase subunit HslU (Shewanella woodyi (strain ATCC 51908 / MS32)).